A 199-amino-acid chain; its full sequence is Recombination protein RecR (199 aa).

A C4-type zinc finger spans residues 57–72; that stretch reads CPICGNITEKEICDIC. The 97-residue stretch at 80-176 folds into the Toprim domain; sequence TTIMVVEQPK…KVTRLAAGLS (97 aa).

Belongs to the RecR family.

Its function is as follows. May play a role in DNA repair. It seems to be involved in an RecBC-independent recombinational process of DNA repair. It may act with RecF and RecO. This is Recombination protein RecR from Lactobacillus acidophilus (strain ATCC 700396 / NCK56 / N2 / NCFM).